The primary structure comprises 255 residues: Syntaxin-23 (255 aa).

The interval 1–31 (MSFQDLEAGRGRSLASSRNINGGGSRQDTTQ) is disordered. Serine 2 carries the N-acetylserine modification. Residues 14–31 (LASSRNINGGGSRQDTTQ) show a composition bias toward polar residues. The 63-residue stretch at 184–246 (EAVIEEREQG…AQGKSHLVRH (63 aa)) folds into the t-SNARE coiled-coil homology domain.

This sequence belongs to the syntaxin family. In terms of assembly, part of the t-SNARE complex. Interacts with RGS1. Expressed at higher levels in leaves, flowers and stems than in roots.

It is found in the membrane. In terms of biological role, may function in the docking or fusion of transport vesicles with the prevacuolar membrane. This is Syntaxin-23 (SYP23) from Arabidopsis thaliana (Mouse-ear cress).